The primary structure comprises 1413 residues: MELMFAEWEDGERFSFEDSDRFEEDSLCSFISEAESLCQNWRGWRKQSAGPNSPTGGGGGGGSGGTRMRDGLVIPLVELSAKQVAFHIPFEVVEKVYPPVPEQLQLRIAFWSFPENEEDIRLYSCLANGSADEFQRGDQLFRMRAVKDPLQIGFHLSATVVPPQMVPPKGAYNVAVMFDRCRVTSCSCTCGAGAKWCTHVVALCLFRIHNASAVCLRAPVSESLSRLQRDQLQKFAQYLISELPQQILPTAQRLLDELLSSQSTAINTVCGAPDPTAGPSASDQSTWYLDESTLTDNIKKTLHKFCGPSPVVFSDVNSMYLSSTEPPAAAEWACLLRPLRGREPEGVWNLLSIVREMFKRRDSNAAPLLEILTVELAQDLLANPPDLKVEPPPAKGKKNKVSTSRQTWVATNTLTKAAFLLTVLSERPEHHNLAFRVGMFALELQRPPASTKALEVKLAYQESEVATLLKKIPLGPSEMSTVRCRAEELREGTLCDYRPVLPLMLASFIFDVLCAPVVSPTGSRPPSRNWNNEMPGDEELGFEAAVAALGMKTTVSEAEHPLLCEGTRREKGDLALALMITYKDDQARLKKILDKLLDRESQTHKPQTLSSFYSSSRPATASQRSPSKHGGPSAPGALQPLTSGSAGPAQPGSVAGAGPGPTEGFTEKNVPESSPHSPCEGLPPEAALTPRPEGKVPSRLALGSRGGYNGRGWGSPGRPKKKHTGMASIDSSAPETTSDSSPTLSRRPLRGGWAPTSWGRGQDSDSISSSSSDSLGSSSSSGSRRASASGGARAKTVEVGRYKGRRPESHAPHVPNQPSEAAAHFYFELAKTVLIKAGGNSSTSIFTHPSSSGGHQGPHRNLHLCAFEIGLYALGLHNFVSPNWLSRTYSSHVSWITGQAMEIGSAALTILVECWDGHLTPPEVASLADRASRARDSNMVRAAAELALSCLPHAHALNPNEIQRALVQCKEQDNLMLEKACMAVEEAAKGGGVYPEVLFEVAHQWFWLYEQTAGGSSTAREGATSCSASGIRAAGEAGRGLPEGRGGPGTEPVTVAAAAVTAATVVPVISVGSSLYPGPGLGHGHSPGLHPYTALQPHLPCSPQYLTHPAHPAHPMPHMPRPAVFPVASSAYPQGVHPAFLGAQYPYSVTPPSLAATAVSFPVPSMAPITVHPYHTEPGLPLPTSVALSSVHPASTFPAIQGASLPALTTQPSPLVSGGFPPPEEETHSQPVNPHSLHHLHAAYRVGMLALEMLGRRAHNDHPNNFSRSPPYTDDVKWLLGLAAKLGVNYVHQFCVGAAKGVLSPFVLQEIVMETLQRLSPAHAHNHLRAPAFHQLVQRCQQAYMQYIHHRLIHLTPADYDDFVNAIRSARSAFCLTPMGMMQFNDILQNLKRSKQTKELWQRVSLEMTTFSP.

Ser36, Ser48, and Ser53 each carry phosphoserine. The segment at 45 to 65 (RKQSAGPNSPTGGGGGGGSGG) is disordered. Residues 55–65 (TGGGGGGGSGG) are compositionally biased toward gly residues. An SWIM-type zinc finger spans residues 172–208 (YNVAVMFDRCRVTSCSCTCGAGAKWCTHVVALCLFRI). A disordered region spans residues 600-817 (ESQTHKPQTL…ESHAPHVPNQ (218 aa)). Residues 604–625 (HKPQTLSSFYSSSRPATASQRS) are compositionally biased toward polar residues. The span at 704 to 715 (SRGGYNGRGWGS) shows a compositional bias: gly residues. Phosphothreonine is present on Thr724. The segment covering 729–744 (IDSSAPETTSDSSPTL) has biased composition (polar residues). Phosphoserine is present on residues Ser738, Ser741, and Ser745. Positions 759–794 (GRGQDSDSISSSSSDSLGSSSSSGSRRASASGGARA) are enriched in low complexity. Basic and acidic residues predominate over residues 795–811 (KTVEVGRYKGRRPESHA). Phosphoserine is present on residues Ser852 and Ser1412.

Belongs to the ZSWIM8 family. Component of the SCF-like E3 ubiquitin-protein ligase complex which contains CUL3, RBX1, ELOB, ELOC and ZSWIM8. Interacts with DAB1.

It localises to the cytoplasm. Its subcellular location is the cytosol. It participates in protein modification; protein ubiquitination. Its function is as follows. Substrate recognition component of a SCF-like E3 ubiquitin-protein ligase complex that promotes target-directed microRNA degradation (TDMD), a process that mediates degradation of microRNAs (miRNAs). The SCF-like E3 ubiquitin-protein ligase complex acts by catalyzing ubiquitination and subsequent degradation of AGO proteins (AGO1, AGO2, AGO3 and/or AGO4), thereby exposing miRNAs for degradation. Specifically recognizes and binds AGO proteins when they are engaged with a TDMD target. May also acts as a regulator of axon guidance: specifically recognizes misfolded ROBO3 and promotes its ubiquitination and subsequent degradation. Plays an essential role for proper embryonic development of heart and lung. Controls protein quality of DAB1, a key signal molecule for brain development, thus protecting its signaling strength. Mechanistically, recognizes intrinsically disordered regions of DAB1 and eliminates misfolded DAB1 that cannot be properly phosphorylated. This chain is Zinc finger SWIM domain-containing protein 8, found in Bos taurus (Bovine).